Reading from the N-terminus, the 328-residue chain is Malate dehydrogenase (328 aa).

12 to 18 provides a ligand contact to NAD(+); that stretch reads GAAGQIA. The substrate site is built by arginine 93 and arginine 99. Residues asparagine 106, glutamine 113, and 130-132 contribute to the NAD(+) site; that span reads VGN. Residues asparagine 132 and arginine 163 each contribute to the substrate site. The active-site Proton acceptor is histidine 188.

Belongs to the LDH/MDH superfamily. MDH type 2 family.

It catalyses the reaction (S)-malate + NAD(+) = oxaloacetate + NADH + H(+). In terms of biological role, catalyzes the reversible oxidation of malate to oxaloacetate. This chain is Malate dehydrogenase, found in Burkholderia lata (strain ATCC 17760 / DSM 23089 / LMG 22485 / NCIMB 9086 / R18194 / 383).